A 714-amino-acid chain; its full sequence is Fatty acid oxidation complex subunit alpha (714 aa).

The interval 1–190 (MEMASAFTLN…KLGLVDDVVP (190 aa)) is enoyl-CoA hydratase. Residues 306–714 (APLNSVGILG…FWKTTATDLQ (409 aa)) form a 3-hydroxyacyl-CoA dehydrogenase region.

In the N-terminal section; belongs to the enoyl-CoA hydratase/isomerase family. The protein in the central section; belongs to the 3-hydroxyacyl-CoA dehydrogenase family. Heterotetramer of two alpha chains (FadJ) and two beta chains (FadI).

Its subcellular location is the cytoplasm. The catalysed reaction is a (3S)-3-hydroxyacyl-CoA = a (2E)-enoyl-CoA + H2O. It carries out the reaction a 4-saturated-(3S)-3-hydroxyacyl-CoA = a (3E)-enoyl-CoA + H2O. It catalyses the reaction a (3S)-3-hydroxyacyl-CoA + NAD(+) = a 3-oxoacyl-CoA + NADH + H(+). The enzyme catalyses (3S)-3-hydroxybutanoyl-CoA = (3R)-3-hydroxybutanoyl-CoA. It participates in lipid metabolism; fatty acid beta-oxidation. Functionally, catalyzes the formation of a hydroxyacyl-CoA by addition of water on enoyl-CoA. Also exhibits 3-hydroxyacyl-CoA epimerase and 3-hydroxyacyl-CoA dehydrogenase activities. The sequence is that of Fatty acid oxidation complex subunit alpha from Escherichia coli (strain SMS-3-5 / SECEC).